The following is a 310-amino-acid chain: MALSRRLRLRLYARLPDFFLLLLFRGCMIEAVNLKSSNRNPVVHEFESVELSCIITDSQTSDPRIEWKKIQDGQTTYVYFDNKIQGDLAGRTDVFGKTSLRIWNVTRSDSAIYRCEVVALNDRKEVDEITIELIVQVKPVTPVCRIPAAVPVGKTATLQCQESEGYPRPHYSWYRNDVPLPTDSRANPRFQNSSFHVNSETGTLVFNAVHKDDSGQYYCIASNDAGAARCEGQDMEVYDLNIAGIIGGVLVVLIVLAVITMGICCAYRRGCFISSKQDGESYKSPGKHDGVNYIRTSEEGDFRHKSSFVI.

Residues 1 to 29 (MALSRRLRLRLYARLPDFFLLLLFRGCMI) form the signal peptide. The Extracellular segment spans residues 30-241 (EAVNLKSSNR…GQDMEVYDLN (212 aa)). Residues 35–127 (KSSNRNPVVH…VALNDRKEVD (93 aa)) enclose the Ig-like V-type domain. 2 disulfide bridges follow: Cys53–Cys115 and Cys160–Cys219. N-linked (GlcNAc...) asparagine glycosylation is found at Asn104 and Asn192. The region spanning 139–236 (PVTPVCRIPA…AARCEGQDME (98 aa)) is the Ig-like C2-type domain. A helical transmembrane segment spans residues 242 to 262 (IAGIIGGVLVVLIVLAVITMG). Residues 263–310 (ICCAYRRGCFISSKQDGESYKSPGKHDGVNYIRTSEEGDFRHKSSFVI) lie on the Cytoplasmic side of the membrane. 2 S-palmitoyl cysteine lipidation sites follow: Cys264 and Cys265.

It belongs to the immunoglobulin superfamily. Interacts with ITGAM. Interacts with GORASP2. Post-translationally, proteolytically cleaved from endothelial cells surface into a soluble form by ADAM10 and ADAM17; the release of soluble JAM3 is increased by pro-inflammatory factors. N-glycosylated. In terms of processing, S-palmitoylated by ZDHHC7. S-palmitoylation promotes expression at tight junctions. Colocalizes with Jam2 near the lumen of seminiferous tubulues. Detected at junctional plaques that correspond to cell-cell contacts between spermatids and Sertoli cells. Detected on endothelial cells, in brain vessels and kidney glomeruli (at protein level). Detected in heart, lung, liver, kidney, testis, thymus, lymph node and Peyer patch. Endothelial cells.

The protein localises to the cell membrane. Its subcellular location is the cell junction. It is found in the desmosome. The protein resides in the tight junction. It localises to the secreted. Junctional adhesion protein that mediates heterotypic cell-cell interactions with its cognate receptor JAM2 to regulate different cellular processes. Plays a role in homing and mobilization of hematopoietic stem and progenitor cells within the bone marrow. At the surface of bone marrow stromal cells, it contributes to the retention of the hematopoietic stem and progenitor cells expressing JAM3. Plays a central role in leukocytes extravasation by facilitating transmigration through the endothelium. Plays a role in spermatogenesis where JAM2 and JAM3, which are respectively expressed by Sertoli and germ cells, mediate an interaction between both cell types and play an essential role in the anchorage of germ cells onto Sertoli cells and the assembly of cell polarity complexes during spermatid differentiation. Also functions as a counter-receptor for ITGAM, mediating leukocyte-platelet interactions and is involved in the regulation of transepithelial migration of polymorphonuclear neutrophils (PMN). Plays a role in angiogenesis. Plays a role in the regulation of cell migration. During myogenesis, it is involved in myocyte fusion. Its function is as follows. Promotes chemotaxis of vascular endothelial cells and stimulates angiogenesis. The sequence is that of Junctional adhesion molecule C (Jam3) from Mus musculus (Mouse).